Here is a 262-residue protein sequence, read N- to C-terminus: Rhomboid-type serine protease 2 (262 aa).

Residues M1 to A16 are Cytoplasmic-facing. The helical transmembrane segment at L17 to L37 threads the bilayer. Topologically, residues R38–S57 are lumenal. Residues L58–A78 traverse the membrane as a helical segment. Over P79–T89 the chain is Cytoplasmic. Residues V90 to L110 form a helical membrane-spanning segment. The Lumenal portion of the chain corresponds to G111–K112. The helical transmembrane segment at L113–Y133 threads the bilayer. S124 acts as the Nucleophile in catalysis. Residues Y134–D151 are Cytoplasmic-facing. A helical transmembrane segment spans residues Y152–A168. At V169–S174 the chain is on the lumenal side. Residues S175–Y191 form a helical membrane-spanning segment. H179 is a catalytic residue. The Cytoplasmic segment spans residues K192–A262. The disordered stretch occupies residues S243–A262. Over residues N252–A262 the composition is skewed to polar residues.

It belongs to the peptidase S54 family. In terms of assembly, interacts with SNX3.

Its subcellular location is the golgi apparatus membrane. It is found in the golgi apparatus. The protein localises to the cis-Golgi network membrane. The enzyme catalyses Cleaves type-1 transmembrane domains using a catalytic dyad composed of serine and histidine that are contributed by different transmembrane domains.. Its function is as follows. Probable rhomboid-type serine protease that catalyzes intramembrane proteolysis. This chain is Rhomboid-type serine protease 2 (RBD2), found in Saccharomyces cerevisiae (strain ATCC 204508 / S288c) (Baker's yeast).